The chain runs to 810 residues: Lon protease (810 aa).

In terms of domain architecture, Lon N-terminal spans 40–233; sequence LIIVPVRGFV…MVAKLLAQRI (194 aa). ATP is bound at residue 385–392; the sequence is GPPGVGKT. A Lon proteolytic domain is found at 621–802; that stretch reads LSVPGVATGL…DDAMAAAFEG (182 aa). Active-site residues include Ser708 and Lys751.

This sequence belongs to the peptidase S16 family. Homohexamer. Organized in a ring with a central cavity.

The protein localises to the cytoplasm. It carries out the reaction Hydrolysis of proteins in presence of ATP.. Functionally, ATP-dependent serine protease that mediates the selective degradation of mutant and abnormal proteins as well as certain short-lived regulatory proteins. Required for cellular homeostasis and for survival from DNA damage and developmental changes induced by stress. Degrades polypeptides processively to yield small peptide fragments that are 5 to 10 amino acids long. Binds to DNA in a double-stranded, site-specific manner. In Methylocella silvestris (strain DSM 15510 / CIP 108128 / LMG 27833 / NCIMB 13906 / BL2), this protein is Lon protease.